A 544-amino-acid polypeptide reads, in one-letter code: Chaperonin GroEL (544 aa).

ATP contacts are provided by residues 29–32, Lys-50, 86–90, Gly-414, and Asp-494; these read TLGP and DGTTT.

Belongs to the chaperonin (HSP60) family. Forms a cylinder of 14 subunits composed of two heptameric rings stacked back-to-back. Interacts with the co-chaperonin GroES.

The protein localises to the cytoplasm. The enzyme catalyses ATP + H2O + a folded polypeptide = ADP + phosphate + an unfolded polypeptide.. Its function is as follows. Together with its co-chaperonin GroES, plays an essential role in assisting protein folding. The GroEL-GroES system forms a nano-cage that allows encapsulation of the non-native substrate proteins and provides a physical environment optimized to promote and accelerate protein folding. The chain is Chaperonin GroEL from Amoebophilus asiaticus (strain 5a2).